The sequence spans 157 residues: SsrA-binding protein (157 aa).

The segment covering 136 to 151 (KRETEKKRDWSREKGR) has biased composition (basic and acidic residues). Positions 136-157 (KRETEKKRDWSREKGRLLRARG) are disordered.

This sequence belongs to the SmpB family.

It localises to the cytoplasm. Its function is as follows. Required for rescue of stalled ribosomes mediated by trans-translation. Binds to transfer-messenger RNA (tmRNA), required for stable association of tmRNA with ribosomes. tmRNA and SmpB together mimic tRNA shape, replacing the anticodon stem-loop with SmpB. tmRNA is encoded by the ssrA gene; the 2 termini fold to resemble tRNA(Ala) and it encodes a 'tag peptide', a short internal open reading frame. During trans-translation Ala-aminoacylated tmRNA acts like a tRNA, entering the A-site of stalled ribosomes, displacing the stalled mRNA. The ribosome then switches to translate the ORF on the tmRNA; the nascent peptide is terminated with the 'tag peptide' encoded by the tmRNA and targeted for degradation. The ribosome is freed to recommence translation, which seems to be the essential function of trans-translation. The polypeptide is SsrA-binding protein (Rhodopseudomonas palustris (strain HaA2)).